We begin with the raw amino-acid sequence, 220 residues long: LHFPL tetraspan subfamily member 1 protein (220 aa).

Positions 1 to 20 are cleaved as a signal peptide; it reads MRSSLTMVGTLWAFLSLVTA. A run of 2 helical transmembrane segments spans residues 86 to 106 and 122 to 142; these read VVTG…VLGC and AAQF…PLGW. An N-linked (GlcNAc...) asparagine glycan is attached at Asn-153. Residues 165–185 traverse the membrane as a helical segment; that stretch reads LGWAYYCAGGGAAAAMLICTW.

The protein belongs to the LHFP family. As to expression, widely expressed. Expressed at high levels in lung, thymus, skeletal muscle, colon and ovary.

Its subcellular location is the membrane. This Homo sapiens (Human) protein is LHFPL tetraspan subfamily member 1 protein.